The sequence spans 356 residues: Nicotinate-nucleotide--dimethylbenzimidazole phosphoribosyltransferase (356 aa).

Glu317 (proton acceptor) is an active-site residue.

This sequence belongs to the CobT family. As to quaternary structure, homodimer.

The catalysed reaction is 5,6-dimethylbenzimidazole + nicotinate beta-D-ribonucleotide = alpha-ribazole 5'-phosphate + nicotinate + H(+). The protein operates within nucleoside biosynthesis; alpha-ribazole biosynthesis; alpha-ribazole from 5,6-dimethylbenzimidazole: step 1/2. Functionally, catalyzes the synthesis of alpha-ribazole-5'-phosphate from nicotinate mononucleotide (NAMN) and 5,6-dimethylbenzimidazole (DMB). This chain is Nicotinate-nucleotide--dimethylbenzimidazole phosphoribosyltransferase, found in Salmonella typhi.